Consider the following 165-residue polypeptide: HTH-type transcriptional regulator MmpR5 (165 aa).

Residues 1-151 enclose the HTH marR-type domain; the sequence is MSVNDGVDQM…LLAYMENVVS (151 aa). A DNA-binding region (H-T-H motif) is located at residues 53-76; it reads SEELATALAASSGGISTNARMLIQ.

In terms of assembly, homodimer.

Its function is as follows. Controls the expression level of the Mmps2-MmpL2, MmpS4-MmpL4, and MmpS5-MmpL5 transport systems. Also controls its own expression. Acts by binding directly to the promoter regions. This Mycobacterium tuberculosis (strain ATCC 25618 / H37Rv) protein is HTH-type transcriptional regulator MmpR5.